Here is an 800-residue protein sequence, read N- to C-terminus: Aldehyde dehydrogenase family 16 member A1 (800 aa).

Belongs to the aldehyde dehydrogenase family. In terms of assembly, interacts with SPG21.

This chain is Aldehyde dehydrogenase family 16 member A1 (ALDH16A1), found in Bos taurus (Bovine).